The sequence spans 230 residues: Large ribosomal subunit protein uL1 (230 aa).

The protein belongs to the universal ribosomal protein uL1 family. Part of the 50S ribosomal subunit.

In terms of biological role, binds directly to 23S rRNA. The L1 stalk is quite mobile in the ribosome, and is involved in E site tRNA release. Its function is as follows. Protein L1 is also a translational repressor protein, it controls the translation of the L11 operon by binding to its mRNA. This is Large ribosomal subunit protein uL1 from Aster yellows witches'-broom phytoplasma (strain AYWB).